The chain runs to 174 residues: ATP synthase subunit b, organellar chromatophore (174 aa).

Residues 26-46 (LINLIIVIGVLFTFLRGFLGE) form a helical membrane-spanning segment.

It belongs to the ATPase B chain family. As to quaternary structure, F-type ATPases have 2 components, F(1) - the catalytic core - and F(0) - the membrane proton channel. F(1) has five subunits: alpha(3), beta(3), gamma(1), delta(1), epsilon(1). F(0) has four main subunits: a(1), b(1), b'(1) and c(10-14). The alpha and beta chains form an alternating ring which encloses part of the gamma chain. F(1) is attached to F(0) by a central stalk formed by the gamma and epsilon chains, while a peripheral stalk is formed by the delta, b and b' chains.

It is found in the plastid. The protein resides in the organellar chromatophore thylakoid membrane. Its function is as follows. F(1)F(0) ATP synthase produces ATP from ADP in the presence of a proton or sodium gradient. F-type ATPases consist of two structural domains, F(1) containing the extramembraneous catalytic core and F(0) containing the membrane proton channel, linked together by a central stalk and a peripheral stalk. During catalysis, ATP synthesis in the catalytic domain of F(1) is coupled via a rotary mechanism of the central stalk subunits to proton translocation. In terms of biological role, component of the F(0) channel, it forms part of the peripheral stalk, linking F(1) to F(0). The polypeptide is ATP synthase subunit b, organellar chromatophore (Paulinella chromatophora).